The following is a 466-amino-acid chain: UDP-N-acetylmuramoylalanine--D-glutamate ligase (466 aa).

Gly121–Thr127 contributes to the ATP binding site.

The protein belongs to the MurCDEF family.

The protein localises to the cytoplasm. It catalyses the reaction UDP-N-acetyl-alpha-D-muramoyl-L-alanine + D-glutamate + ATP = UDP-N-acetyl-alpha-D-muramoyl-L-alanyl-D-glutamate + ADP + phosphate + H(+). It functions in the pathway cell wall biogenesis; peptidoglycan biosynthesis. Functionally, cell wall formation. Catalyzes the addition of glutamate to the nucleotide precursor UDP-N-acetylmuramoyl-L-alanine (UMA). The chain is UDP-N-acetylmuramoylalanine--D-glutamate ligase from Mesorhizobium japonicum (strain LMG 29417 / CECT 9101 / MAFF 303099) (Mesorhizobium loti (strain MAFF 303099)).